The following is a 315-amino-acid chain: MSITKAWNSSSVTMFILLGFTDHPELQALLFVTFLGIYLTTLAWNLALIFLIRGDTHLHTPMYFFLSNLSFIDICYSSAVAPNMLTDFFWEQKTISFVGCAAQFFFFVGMGLSECLLLTAMAYDRYAAISSPLLYPTIMTQGLCTRMVVGAYVGGFLSSLIQASSIFRLHFCGPNIINHFFCDLPPVLALSCSDTFLSQVVNFLVVVTVGGTSFLQLLISYGYIVSAVLKIPSAEGRWKACNTCASHLMVVTLLFGTALFVYLRPSSSYLLGRDKVVSVFYSLVIPMLNPLIYSLRNKEIKDALWKVLERKKVFS.

Over 1–28 (MSITKAWNSSSVTMFILLGFTDHPELQA) the chain is Extracellular. The N-linked (GlcNAc...) asparagine glycan is linked to Asn8. The chain crosses the membrane as a helical span at residues 29-52 (LLFVTFLGIYLTTLAWNLALIFLI). Over 53 to 60 (RGDTHLHT) the chain is Cytoplasmic. Residues 61–82 (PMYFFLSNLSFIDICYSSAVAP) traverse the membrane as a helical segment. Residues 83–103 (NMLTDFFWEQKTISFVGCAAQ) lie on the Extracellular side of the membrane. An intrachain disulfide couples Cys100 to Cys192. The chain crosses the membrane as a helical span at residues 104-123 (FFFFVGMGLSECLLLTAMAY). The Cytoplasmic segment spans residues 124-142 (DRYAAISSPLLYPTIMTQG). Residues 143 to 161 (LCTRMVVGAYVGGFLSSLI) form a helical membrane-spanning segment. The Extracellular portion of the chain corresponds to 162–198 (QASSIFRLHFCGPNIINHFFCDLPPVLALSCSDTFLS). The chain crosses the membrane as a helical span at residues 199 to 222 (QVVNFLVVVTVGGTSFLQLLISYG). Residues 223 to 239 (YIVSAVLKIPSAEGRWK) are Cytoplasmic-facing. The chain crosses the membrane as a helical span at residues 240-262 (ACNTCASHLMVVTLLFGTALFVY). The Extracellular portion of the chain corresponds to 263 to 275 (LRPSSSYLLGRDK). Residues 276-295 (VVSVFYSLVIPMLNPLIYSL) form a helical membrane-spanning segment. Over 296-315 (RNKEIKDALWKVLERKKVFS) the chain is Cytoplasmic.

The protein belongs to the G-protein coupled receptor 1 family.

Its subcellular location is the cell membrane. In terms of biological role, odorant receptor. The sequence is that of Olfactory receptor 5A1 (OR5A1) from Homo sapiens (Human).